The primary structure comprises 286 residues: Ribosomal RNA small subunit methyltransferase I (286 aa).

The protein belongs to the methyltransferase superfamily. RsmI family.

Its subcellular location is the cytoplasm. The enzyme catalyses cytidine(1402) in 16S rRNA + S-adenosyl-L-methionine = 2'-O-methylcytidine(1402) in 16S rRNA + S-adenosyl-L-homocysteine + H(+). Catalyzes the 2'-O-methylation of the ribose of cytidine 1402 (C1402) in 16S rRNA. This is Ribosomal RNA small subunit methyltransferase I from Escherichia coli O157:H7.